The chain runs to 85 residues: Beta-insect depressant toxin Lqh-dprIT3c (85 aa).

A signal peptide spans 1 to 21; it reads MKLLLLLTISASMLIEGLVNA. An LCN-type CS-alpha/beta domain is found at 22–82; it reads DGYIRGGDGC…EWDYETNTCG (61 aa). 4 disulfides stabilise this stretch: Cys31–Cys81, Cys35–Cys56, Cys42–Cys63, and Cys46–Cys65. Position 82 is a glycine amide (Gly82).

Belongs to the long (4 C-C) scorpion toxin superfamily. Sodium channel inhibitor family. Beta subfamily. Expressed by the venom gland.

Its subcellular location is the secreted. Functionally, depressant insect beta-toxins cause a transient contraction paralysis followed by a slow flaccid paralysis. They bind voltage-independently at site-4 of sodium channels (Nav) and block action potentials, primarily by depolarizing the axonal membrane and suppressing the sodium current. This depressant toxin is active only on insects. It is found in a relatively small amount in the venom, and its activity on insects is 10-fold higher compared to other known depressant toxins. This chain is Beta-insect depressant toxin Lqh-dprIT3c, found in Leiurus hebraeus (Hebrew deathstalker scorpion).